The sequence spans 264 residues: MEFKHKKKYGQNFLNNKDEILNKIIEVSNIDDNDEILEIGPGQGALTSLLVERVKKITCVEIDKDLENTLRKKFSSKENYTLVMEDVLEVDLRRYINQGTKVVANIPYYITSPIINKIIENKDLIDEAYIMVQKEVGERICAKSGKERGILTLAVEYYGESEYLFTIPREFFNPIPNVDSAFISIKFYKDDRYKNKISEDLFFKYVKAAFSNKRKNIVNNLVTLGYSKDKIKEILNQIEISENERAENISIDKFIELIKIFEGR.

6 residues coordinate S-adenosyl-L-methionine: N12, L14, G40, E61, D86, and N105.

It belongs to the class I-like SAM-binding methyltransferase superfamily. rRNA adenine N(6)-methyltransferase family. RsmA subfamily.

It localises to the cytoplasm. It catalyses the reaction adenosine(1518)/adenosine(1519) in 16S rRNA + 4 S-adenosyl-L-methionine = N(6)-dimethyladenosine(1518)/N(6)-dimethyladenosine(1519) in 16S rRNA + 4 S-adenosyl-L-homocysteine + 4 H(+). Functionally, specifically dimethylates two adjacent adenosines (A1518 and A1519) in the loop of a conserved hairpin near the 3'-end of 16S rRNA in the 30S particle. May play a critical role in biogenesis of 30S subunits. The chain is Ribosomal RNA small subunit methyltransferase A from Fusobacterium nucleatum subsp. nucleatum (strain ATCC 25586 / DSM 15643 / BCRC 10681 / CIP 101130 / JCM 8532 / KCTC 2640 / LMG 13131 / VPI 4355).